Here is a 1157-residue protein sequence, read N- to C-terminus: MSRGSIEIPLRDTDEVIELDFDQLPEGDEVISILKQEHTQLHIWIALALEYFKQGKTEDFVKLLEAARIDGNLDYRDHEKDQMTCLDTLAAYYVQQARKEKNKDNKKELITQATLLYTMADKIIMYDQNHLLGRACFCLLEGDKMDQADAQFHFVLNQSPNNIPALLGKACISFNKKDYRGALAYYKKALRTNPGCPAGVRLGMGHCFVKLNKLDKARLAFGRALDLNPTCVGALVGLAVLELNNKEADSIKNGVQLLSKAYTIDPSNPMVLNHLANHFFFKKDYSKVQHLALHAFHNTEVEAMQAESCYQLARSFHVQEDYDQAFQYYYQATQFAAASFVLPFFGLGQMYIYRGDKENASQCFEKVLKAYPNNYETMKILGSLYAASDDQEKRDIAKSHLKKVTEQYPDDVEAWIELAQILEQTDIQNALSAYGTATRILQEKVQADVPPEILNNVGALHFRLGNLGEAKKYFLASLDRAKAEAEHDEHYYNSISVTTSYNLARLYEGLCEFHESEKLYKNILREHPNYVDCYLRLGAMARDKGNFYEASDWFKEALQINQDHPDAWSLIGNLHLAKQEWGPGQKKFERILKQPSTQNDTYSMLALGNVWLQTLHQPTRDREKEKRHQDRALAIYKQVLRNDSKNLFAANGIGAVLAHKGYVREARDVFAQVREATADISDVWLNLAHIYVEQKQYISAVQMYENCLRKFYKHQNTEVLLYLARALFKCGKLQECKQILLKARHVAPNDTVLMFNVALVLQRLATLVLKDEKSNLKAVLNAVKELELAHRYFNYLSKVGDKMRFDLALATSEARQCSDLLSQAQYHVARARKQDEEEKEMRTKQEQEKEVLRQKLLKEQEEKHLREIEEQKKLLEQRAQYLEKTRNLLSFTGEMETPKEKKQRGGGGRRSKKNGEFEEFVNDDSDEELAPRKKKRKKGGSSSGEQGEGGDEGEGGEKKKKKRRKRPQKAAGSDDDEEQTPQSKKRQPKKKEKPAKLERTPPSMKGKIKSKAIISSSEDDSDEDKLKIADEGHARDSDSDDGPRKSQKRVISDSDSDNGNKSGSDAGSPQKSQRSDEDSDNAFARKRRRQISGSDNDSAQSRRSSGGSDNESRAASNSAESERGSDRGSDNEGSERASGNQSEQEVEKSERGSDESD.

TPR repeat units lie at residues leucine 41–tyrosine 75, asparagine 129–asparagine 162, isoleucine 163–cysteine 196, alanine 198–cysteine 231, leucine 235–asparagine 268, alanine 306–serine 339, valine 341–asparagine 374, valine 412–lysine 444, proline 451–glutamate 484, valine 497–tyrosine 530, valine 531–histidine 564, aspartate 566–glutamine 598, glutamine 613–asparagine 646, phenylalanine 648–isoleucine 680, serine 681–histidine 714, and threonine 717–aspartate 750. The disordered stretch occupies residues leucine 889 to aspartate 1157. A compositionally biased stretch (basic residues) spans lysine 901 to lysine 912. Over residues phenylalanine 917–glutamate 928 the composition is skewed to acidic residues. 2 stretches are compositionally biased toward basic residues: residues lysine 958–glutamine 968 and serine 983–lysine 993. The span at aspartate 1024–arginine 1044 shows a compositional bias: basic and acidic residues. The segment covering aspartate 1057–serine 1068 has biased composition (low complexity). A compositionally biased stretch (polar residues) spans isoleucine 1091–aspartate 1109. Composition is skewed to basic and acidic residues over residues glutamate 1120–glutamate 1135 and glutamate 1145–aspartate 1157.

In terms of assembly, component of the PAF1 complex, which at least consists of cdc73, paf1, leo1, ctr9 and rtf1. The PAF1 complex interacts with PHF5A.

The protein localises to the nucleus speckle. Component of the PAF1 complex (PAF1C) which has multiple functions during transcription by RNA polymerase II. PAF1C associates with RNA polymerase II, is involved in transcriptional elongation and in histone modifications including methylation on histone H3 'Lys-4' (H3K4me3). The polypeptide is RNA polymerase-associated protein CTR9 homolog (ctr9) (Xenopus laevis (African clawed frog)).